The sequence spans 493 residues: Growth-regulating factor 8 (493 aa).

The region spanning Ala149–Lys184 is the QLQ domain. The region spanning Asp243–Ser287 is the WRC domain. 2 short sequence motifs (bipartite nuclear localization signal) span residues Arg248 to Arg258 and Lys276 to Lys283. The segment at Cys270–Asn302 is disordered. Residues His273–Lys283 show a composition bias toward basic residues.

The protein belongs to the GRF family. In terms of tissue distribution, predominantly expressed in shoot tips and flowers.

It is found in the nucleus. Its function is as follows. Transcription activator that plays a role in the regulation of cell expansion in leaf and cotyledons tissues. Component of a network formed by miR396, the GRFs and their interacting factors (GIFs) acting in the regulation of meristem function, at least partially through the control of cell proliferation. The sequence is that of Growth-regulating factor 8 (GRF8) from Arabidopsis thaliana (Mouse-ear cress).